Here is a 297-residue protein sequence, read N- to C-terminus: UBX domain-containing protein 1 (297 aa).

Ala2 carries the N-acetylalanine modification. The region spanning 2 to 42 is the UBA domain; the sequence is AELTALESLIEMGFPRGRAEKALALTGNQGIEAAMDWLMEH. Residues 38–212 are disordered; that stretch reads WLMEHEDDPD…QEPPTKREYD (175 aa). A compositionally biased stretch (acidic residues) spans 42 to 52; the sequence is HEDDPDVDEPL. An interaction with BRCA1 region spans residues 43–297; it reads EDDPDVDEPL…VLIVAKKCPS (255 aa). 2 stretches are compositionally biased toward basic and acidic residues: residues 86 to 122 and 137 to 177; these read LTEE…EREK and KLQE…ERAQ. Residues 86–172 are a coiled coil; that stretch reads LTEEERQEQT…RVREKIERDK (87 aa). Residue Ser199 is modified to Phosphoserine. Ser200 bears the Phosphoserine; by MAPK12 mark. A phosphothreonine mark is found at Thr207 and Thr229. The UBX domain maps to 209-291; that stretch reads REYDQCRIQV…GLVPSAVLIV (83 aa). At Ser270 the chain carries Phosphoserine.

As to quaternary structure, component of a complex required to couple retrotranslocation, ubiquitination and deglycosylation composed of NGLY1, SAKS1, AMFR, VCP and RAD23B. Interacts with HOMER2. Interacts directly with VCP. Interacts with BRCA1 and BARD1; interaction takes place when BRCA1 is not autoubiquitinated bur is strongly enhanced in the presence of autoubiquitinated BRCA1.

It is found in the cytoplasm. Functionally, ubiquitin-binding protein that interacts with the BRCA1-BARD1 heterodimer, and regulates its activity. Specifically binds 'Lys-6'-linked polyubiquitin chains. Interaction with autoubiquitinated BRCA1, leads to inhibit the E3 ubiquitin-protein ligase activity of the BRCA1-BARD1 heterodimer. Component of a complex required to couple deglycosylation and proteasome-mediated degradation of misfolded proteins in the endoplasmic reticulum that are retrotranslocated in the cytosol. This is UBX domain-containing protein 1 (Ubxn1) from Rattus norvegicus (Rat).